Here is a 136-residue protein sequence, read N- to C-terminus: UPF0225 protein Pnap_0466 (136 aa).

This sequence belongs to the UPF0225 family.

This Polaromonas naphthalenivorans (strain CJ2) protein is UPF0225 protein Pnap_0466.